Here is a 356-residue protein sequence, read N- to C-terminus: Alanine racemase, catabolic (356 aa).

Lysine 35 (proton acceptor; specific for D-alanine) is an active-site residue. At lysine 35 the chain carries N6-(pyridoxal phosphate)lysine. Arginine 130 provides a ligand contact to substrate. Tyrosine 253 serves as the catalytic Proton acceptor; specific for L-alanine. Substrate is bound at residue methionine 301.

This sequence belongs to the alanine racemase family. Requires pyridoxal 5'-phosphate as cofactor.

The enzyme catalyses L-alanine = D-alanine. In terms of biological role, isomerizes L-alanine to D-alanine which is then oxidized to pyruvate by DadA. In Escherichia coli (strain K12), this protein is Alanine racemase, catabolic (dadX).